A 392-amino-acid polypeptide reads, in one-letter code: Phosphoglycerate kinase (392 aa).

Substrate is bound by residues 21 to 23 (DLN), Arg36, 59 to 62 (HRGR), Arg113, and Arg146. Residues Lys197, Glu314, and 340 to 343 (GGDT) each bind ATP.

This sequence belongs to the phosphoglycerate kinase family. Monomer.

The protein localises to the cytoplasm. It catalyses the reaction (2R)-3-phosphoglycerate + ATP = (2R)-3-phospho-glyceroyl phosphate + ADP. It functions in the pathway carbohydrate degradation; glycolysis; pyruvate from D-glyceraldehyde 3-phosphate: step 2/5. The polypeptide is Phosphoglycerate kinase (Vesicomyosocius okutanii subsp. Calyptogena okutanii (strain HA)).